The sequence spans 281 residues: Nucleotide-binding protein Noc_2797 (281 aa).

Position 8 to 15 (8 to 15) interacts with ATP; it reads GVSGSGKS. Position 58–61 (58–61) interacts with GTP; that stretch reads DARN.

The protein belongs to the RapZ-like family.

In terms of biological role, displays ATPase and GTPase activities. The protein is Nucleotide-binding protein Noc_2797 of Nitrosococcus oceani (strain ATCC 19707 / BCRC 17464 / JCM 30415 / NCIMB 11848 / C-107).